Reading from the N-terminus, the 613-residue chain is Proton myo-inositol cotransporter hmit-1.2 (613 aa).

Residues 1–21 are Cytoplasmic-facing; sequence MVAVEFKVSESGRPRPEKNPK. A helical transmembrane segment spans residues 22–42; that stretch reads LGFFVYLLGSAAIIGGFLFGY. Topologically, residues 43–69 are extracellular; that stretch reads DTSVVSAAMLYVPEAPGLKPMGTVWKE. Residues 70-90 traverse the membrane as a helical segment; sequence VIVSITPGMAAVGAWFSGAGS. Over 91–96 the chain is Cytoplasmic; that stretch reads DRYGRK. A helical transmembrane segment spans residues 97-117; it reads PIIIGSTLIFVCGAVICAVAW. At 118–119 the chain is on the extracellular side; that stretch reads TK. A helical membrane pass occupies residues 120 to 140; that stretch reads IVMLIGRIFLGVGIGFASMVV. Residues 141–157 are Cytoplasmic-facing; sequence PVYLGEASPTHVRGTLV. The helical transmembrane segment at 158-178 threads the bilayer; that stretch reads SAFAMMISFGQVVANIMGGVF. At 179–189 the chain is on the extracellular side; the sequence is SYWEPYTIGWR. Residues 190–210 form a helical membrane-spanning segment; sequence LMFAFAGIPALIQFVCFIFLP. At 211-279 the chain is on the cytoplasmic side; sequence ETPRWLYENG…RILKTPHVLK (69 aa). A helical transmembrane segment spans residues 280 to 300; it reads ACFIGSMLQAFQQLAGINTIL. The Extracellular segment spans residues 301-317; it reads YYTADIIRSAGIENYHT. Residues 318–338 traverse the membrane as a helical segment; it reads IIWISVILSICNLIGPFAPMF. Residues 339-347 lie on the Cytoplasmic side of the membrane; that stretch reads FIEKLGRRK. Residues 348–368 form a helical membrane-spanning segment; sequence LFLFSCAGVVVSLVLIGVSFL. Over 369–472 the chain is Extracellular; that stretch reads LVGNDSAPNF…QKHHCTTSYT (104 aa). N-linked (GlcNAc...) asparagine glycans are attached at residues N372, N451, and N456. The helical transmembrane segment at 473 to 493 threads the bilayer; the sequence is ILPIVMMGVYLLTFSCGFTSL. At 494–515 the chain is on the cytoplasmic side; the sequence is PWVLNSEFYPMWARSTCVSIST. Residues 516–536 traverse the membrane as a helical segment; that stretch reads LSNWVFNLIIALTYLSLTHAI. At 537 to 539 the chain is on the extracellular side; it reads TKY. A helical transmembrane segment spans residues 540–560; that stretch reads GAFWLYAIFTIIAFIFIYFLV. Over 561 to 613 the chain is Cytoplasmic; that stretch reads PETTGYSIDEVEMLFMNKRQRNIAMQARQAKLDAASDKDKNSSTSLSTETITM. The segment at 594–613 is disordered; the sequence is AASDKDKNSSTSLSTETITM. Residues 602–613 are compositionally biased toward polar residues; the sequence is SSTSLSTETITM.

It belongs to the major facilitator superfamily. Sugar transporter (TC 2.A.1.1) family. In terms of tissue distribution, expressed in the excretory canal cell and in pairs of amphid and sheath glia.

Its subcellular location is the cell membrane. It is found in the perikaryon. The enzyme catalyses myo-inositol(out) + H(+)(out) = myo-inositol(in) + H(+)(in). Functionally, h(+)-myo-inositol cotransporter. Probably by promoting the transport of myo-inositol regulates intracellular osmosis in response to hyperosmotic stress. The sequence is that of Proton myo-inositol cotransporter hmit-1.2 from Caenorhabditis elegans.